The sequence spans 478 residues: Putative UDP-glucose flavonoid 3-O-glucosyltransferase 3 (478 aa).

This sequence belongs to the UDP-glycosyltransferase family.

The chain is Putative UDP-glucose flavonoid 3-O-glucosyltransferase 3 from Fragaria ananassa (Strawberry).